The following is a 405-amino-acid chain: Palmitoyltransferase PFA5 (405 aa).

The next 5 membrane-spanning stretches (helical) occupy residues Tyr12–Ile32, Ile51–Ile71, Leu154–Cys174, Phe191–Ile211, and Phe310–Ile330. Residues Tyr111 to Met161 form the DHHC domain.

The protein belongs to the DHHC palmitoyltransferase family. PFA5 subfamily. Post-translationally, autopalmitoylated.

The protein resides in the membrane. The enzyme catalyses L-cysteinyl-[protein] + hexadecanoyl-CoA = S-hexadecanoyl-L-cysteinyl-[protein] + CoA. The polypeptide is Palmitoyltransferase PFA5 (PFA5) (Candida albicans (strain SC5314 / ATCC MYA-2876) (Yeast)).